We begin with the raw amino-acid sequence, 89 residues long: Small ribosomal subunit protein uS15 (89 aa).

The segment covering 1 to 21 has biased composition (basic and acidic residues); it reads MALSPEKKNEIIENFKTHEGD. Positions 1–23 are disordered; the sequence is MALSPEKKNEIIENFKTHEGDTG.

It belongs to the universal ribosomal protein uS15 family. Part of the 30S ribosomal subunit. Forms a bridge to the 50S subunit in the 70S ribosome, contacting the 23S rRNA.

One of the primary rRNA binding proteins, it binds directly to 16S rRNA where it helps nucleate assembly of the platform of the 30S subunit by binding and bridging several RNA helices of the 16S rRNA. Functionally, forms an intersubunit bridge (bridge B4) with the 23S rRNA of the 50S subunit in the ribosome. In Desulforamulus reducens (strain ATCC BAA-1160 / DSM 100696 / MI-1) (Desulfotomaculum reducens), this protein is Small ribosomal subunit protein uS15.